The following is a 329-amino-acid chain: Malate dehydrogenase (329 aa).

Residue 12–18 coordinates NAD(+); it reads GAAGQIG. Residues Arg95 and Arg101 each contribute to the substrate site. NAD(+) contacts are provided by residues Asn108, Gln115, and 132–134; that span reads VGN. Residues Asn134 and Arg165 each coordinate substrate. The active-site Proton acceptor is the His190.

Belongs to the LDH/MDH superfamily. MDH type 2 family.

It carries out the reaction (S)-malate + NAD(+) = oxaloacetate + NADH + H(+). Functionally, catalyzes the reversible oxidation of malate to oxaloacetate. The protein is Malate dehydrogenase of Janthinobacterium sp. (strain Marseille) (Minibacterium massiliensis).